The sequence spans 77 residues: ATP synthase subunit c (77 aa).

The next 2 membrane-spanning stretches (helical) occupy residues 13–33 and 55–75; these read IATVGYGLAAIGPGIGVGIVA and FLGIAFSEALALIGLATYFIF.

It belongs to the ATPase C chain family. In terms of assembly, F-type ATPases have 2 components, F(1) - the catalytic core - and F(0) - the membrane proton channel. F(1) has five subunits: alpha(3), beta(3), gamma(1), delta(1), epsilon(1). F(0) has three main subunits: a(1), b(2) and c(10-14). The alpha and beta chains form an alternating ring which encloses part of the gamma chain. F(1) is attached to F(0) by a central stalk formed by the gamma and epsilon chains, while a peripheral stalk is formed by the delta and b chains.

The protein resides in the cell membrane. Functionally, f(1)F(0) ATP synthase produces ATP from ADP in the presence of a proton or sodium gradient. F-type ATPases consist of two structural domains, F(1) containing the extramembraneous catalytic core and F(0) containing the membrane proton channel, linked together by a central stalk and a peripheral stalk. During catalysis, ATP synthesis in the catalytic domain of F(1) is coupled via a rotary mechanism of the central stalk subunits to proton translocation. Key component of the F(0) channel; it plays a direct role in translocation across the membrane. A homomeric c-ring of between 10-14 subunits forms the central stalk rotor element with the F(1) delta and epsilon subunits. The polypeptide is ATP synthase subunit c (Clavibacter sepedonicus (Clavibacter michiganensis subsp. sepedonicus)).